Consider the following 1069-residue polypeptide: DNA annealing helicase and endonuclease ZRANB3 (1069 aa).

The Helicase ATP-binding domain occupies 46–208 (VFALRRDGRC…FMQIEALFPQ (163 aa)). The interval 46–481 (VFALRRDGRC…GRKEKLQATE (436 aa)) is DNA annealing helicase activity. Residue 59–66 (DEMGLGKT) coordinates ATP. Positions 157–160 (DESH) match the DEAH box motif. Positions 325–485 (AVKDYIKMLL…KLQATEDDKE (161 aa)) constitute a Helicase C-terminal domain. A PIP-box motif is present at residues 518–525 (QHDIRSFF). Residues 617–646 (PEKGWQCGFCTFLNNPGLPYCEMCENPRSR) form a RanBP2-type zinc finger. Positions 648–720 (AGRNHLQDNN…PEIGQLNNSG (73 aa)) are disordered. 2 stretches are compositionally biased toward basic and acidic residues: residues 652-661 (HLQDNNKNDE) and 677-707 (ECER…EDRL). The HNH domain occupies 1001–1041 (PGEGHFWQVDHIRPVYEGGGQCSLDNLQTLCTVCHKERTAQ). The tract at residues 1001 to 1069 (PGEGHFWQVD…SDITRFLVKK (69 aa)) is endonuclease activity. The APIM motif motif lies at 1064 to 1068 (RFLVK).

This sequence belongs to the SNF2/RAD54 helicase family. Interacts (via PIP-box and RanBP2-type zinc finger) with PCNA (when PCNA is polyubiquitinated via 'Lys-63'-linked polyubiquitin).

It is found in the nucleus. It localises to the chromosome. DNA annealing helicase and endonuclease required to maintain genome stability at stalled or collapsed replication forks by facilitating fork restart and limiting inappropriate recombination that could occur during template switching events. Recruited to the sites of stalled DNA replication by polyubiquitinated PCNA and acts as a structure-specific endonuclease that cleaves the replication fork D-loop intermediate, generating an accessible 3'-OH group in the template of the leading strand, which is amenable to extension by DNA polymerase. In addition to endonuclease activity, also catalyzes the fork regression via annealing helicase activity in order to prevent disintegration of the replication fork and the formation of double-strand breaks. The sequence is that of DNA annealing helicase and endonuclease ZRANB3 (Zranb3) from Mus musculus (Mouse).